The chain runs to 277 residues: MATNFLVHEKIWFDKFKYDDAERKFYEQMNGPVAGSSRQENGASVILRDIARARENIQKSLAGSAGPGASSGPSGDHSELVTRIASLEVENQSLRGVVQDLQQAVSKLEARLSALEKSSPAHRATTPQTQHVSPMRQVEPPSRKAATATEDDEDDDIDLFGSDEEEDKEAARLREERLRQYAEKKAKKPALVAKSSILLDVKPWDDETDMAQLEACVRSVQLDGLVWGSSKLVPVGYGIRKLQIQCVVECRWGRPLERSHQVEEHVQSVDIAAFNKI.

N-acetylalanine is present on A2. At K17 the chain carries N6-acetyllysine. Phosphoserine occurs at positions 37, 44, 60, 86, and 106. At K107 the chain carries N6-acetyllysine. The disordered stretch occupies residues 113–171; it reads SALEKSSPAHRATTPQTQHVSPMRQVEPPSRKAATATEDDEDDDIDLFGSDEEEDKEAA. At K117 the chain carries N6-acetyllysine; alternate. K117 carries the N6-succinyllysine; alternate modification. S119 is modified (phosphoserine). T129 carries the post-translational modification Phosphothreonine. S133 carries the phosphoserine modification. T147 is subject to Phosphothreonine. Acidic residues predominate over residues 149 to 168; the sequence is TEDDEDDDIDLFGSDEEEDK. S162 is subject to Phosphoserine; by CK2.

Belongs to the EF-1-beta/EF-1-delta family. EF-1 is composed of 4 subunits: alpha, beta, delta, and gamma.

In terms of biological role, EF-1-beta and EF-1-delta stimulate the exchange of GDP bound to EF-1-alpha to GTP. The chain is Elongation factor 1-delta (EEF1D) from Ovis aries (Sheep).